The following is a 540-amino-acid chain: Phosphoenolpyruvate carboxykinase (ATP) (540 aa).

Residue arginine 65 coordinates substrate. Residue lysine 87 is modified to N6-acetyllysine. Tyrosine 207 and lysine 213 together coordinate substrate. Residues lysine 213, histidine 232, and 248 to 256 (GLSGTGKTT) each bind ATP. Residues lysine 213 and histidine 232 each contribute to the Mn(2+) site. Mn(2+) is bound at residue aspartate 269. Residues glutamate 297, arginine 333, 449 to 450 (RI), and threonine 455 each bind ATP. Arginine 333 contributes to the substrate binding site. At lysine 523 the chain carries N6-acetyllysine.

This sequence belongs to the phosphoenolpyruvate carboxykinase (ATP) family. In terms of assembly, monomer. It depends on Mn(2+) as a cofactor.

The protein localises to the cytoplasm. It catalyses the reaction oxaloacetate + ATP = phosphoenolpyruvate + ADP + CO2. It functions in the pathway carbohydrate biosynthesis; gluconeogenesis. Its function is as follows. Involved in the gluconeogenesis. Catalyzes the conversion of oxaloacetate (OAA) to phosphoenolpyruvate (PEP) through direct phosphoryl transfer between the nucleoside triphosphate and OAA. The polypeptide is Phosphoenolpyruvate carboxykinase (ATP) (Escherichia fergusonii (strain ATCC 35469 / DSM 13698 / CCUG 18766 / IAM 14443 / JCM 21226 / LMG 7866 / NBRC 102419 / NCTC 12128 / CDC 0568-73)).